The primary structure comprises 238 residues: Ribosomal RNA small subunit methyltransferase G (238 aa).

S-adenosyl-L-methionine contacts are provided by residues Gly-77, Phe-82, 128–129 (AE), and Arg-147.

Belongs to the methyltransferase superfamily. RNA methyltransferase RsmG family.

It localises to the cytoplasm. In terms of biological role, specifically methylates the N7 position of guanine in position 535 of 16S rRNA. This Exiguobacterium sibiricum (strain DSM 17290 / CCUG 55495 / CIP 109462 / JCM 13490 / 255-15) protein is Ribosomal RNA small subunit methyltransferase G.